A 301-amino-acid polypeptide reads, in one-letter code: Mitochondrial thiamine pyrophosphate carrier 1 (301 aa).

Solcar repeat units lie at residues 15–102 (VTPT…ISKS), 115–200 (SSAN…AREL), and 206–293 (RVPF…SLSF). The next 6 helical transmembrane spans lie at 20–38 (ALVA…TAPL), 79–99 (VPAE…YSII), 121–141 (LIVG…FDLL), 172–192 (IYAG…LMFW), 207–227 (VPFI…GITF), and 252–272 (IFVT…FGIS).

The protein belongs to the mitochondrial carrier (TC 2.A.29) family.

It localises to the mitochondrion inner membrane. Functionally, mitochondrial transporter that mediates uptake of thiamine pyrophosphate (ThPP) into mitochondria. This is Mitochondrial thiamine pyrophosphate carrier 1 (TPC1) from Candida albicans (strain SC5314 / ATCC MYA-2876) (Yeast).